A 287-amino-acid polypeptide reads, in one-letter code: Large ribosomal subunit protein uL2 (287 aa).

Disordered stretches follow at residues 1 to 30 (MGIR…DQPE) and 211 to 287 (NRWK…GRQS). Positions 12-22 (GTRQKSVSDFS) are enriched in polar residues. Composition is skewed to basic residues over residues 211–220 (NRWKGRRPKV) and 258–287 (KTRK…GRQS).

It belongs to the universal ribosomal protein uL2 family. In terms of assembly, part of the 50S ribosomal subunit. Forms a bridge to the 30S subunit in the 70S ribosome.

One of the primary rRNA binding proteins. Required for association of the 30S and 50S subunits to form the 70S ribosome, for tRNA binding and peptide bond formation. It has been suggested to have peptidyltransferase activity; this is somewhat controversial. Makes several contacts with the 16S rRNA in the 70S ribosome. In Cyanothece sp. (strain PCC 7425 / ATCC 29141), this protein is Large ribosomal subunit protein uL2.